The following is a 388-amino-acid chain: AT-rich binding protein (388 aa).

The segment at 29 to 52 adopts a C2H2-type 1 zinc-finger fold; the sequence is IVCHTCQEELQTQDQFWKHIQDEH. Low complexity-rich tracts occupy residues 138–165 and 249–265; these read QQHQ…LQQQ and VSVS…STTP. Disordered stretches follow at residues 138 to 168 and 240 to 265; these read QQHQ…QRDV and PPPP…STTP. C2H2-type zinc fingers lie at residues 321–345 and 351–374; these read YVCD…RVVH and FNCE…KKKH.

It localises to the nucleus. May be a transcription factor for genes having (A+T) stretches in their promoter and/or enhancer regions. Binds to AT rich DNA. In Drosophila melanogaster (Fruit fly), this protein is AT-rich binding protein.